The primary structure comprises 145 residues: 3-hydroxyacyl-[acyl-carrier-protein] dehydratase FabZ (145 aa).

The active site involves histidine 48.

This sequence belongs to the thioester dehydratase family. FabZ subfamily.

It is found in the cytoplasm. It catalyses the reaction a (3R)-hydroxyacyl-[ACP] = a (2E)-enoyl-[ACP] + H2O. Involved in unsaturated fatty acids biosynthesis. Catalyzes the dehydration of short chain beta-hydroxyacyl-ACPs and long chain saturated and unsaturated beta-hydroxyacyl-ACPs. The sequence is that of 3-hydroxyacyl-[acyl-carrier-protein] dehydratase FabZ from Stutzerimonas stutzeri (strain A1501) (Pseudomonas stutzeri).